The chain runs to 190 residues: MLYLASRSPRRQELLQRLDVPFQTVQLDVPELRAADESPDHYVQRVALDKAHAGLALVQAADPDAIVLGSDTEVVLGERVFGKPVDVDDAIAMLRALSGRTHQVLTAVVLVCAQRAPAQALVVSEVTFDRLDDAQIAAYAACGEPMGKAGAYAIQGRAERFIRHLSGSYSGVMGLPLYHTSQLLTAFGAH.

Asp-71 functions as the Proton acceptor in the catalytic mechanism.

Belongs to the Maf family. YhdE subfamily. A divalent metal cation is required as a cofactor.

It is found in the cytoplasm. The enzyme catalyses dTTP + H2O = dTMP + diphosphate + H(+). It carries out the reaction UTP + H2O = UMP + diphosphate + H(+). Functionally, nucleoside triphosphate pyrophosphatase that hydrolyzes dTTP and UTP. May have a dual role in cell division arrest and in preventing the incorporation of modified nucleotides into cellular nucleic acids. The polypeptide is dTTP/UTP pyrophosphatase (Xanthomonas oryzae pv. oryzae (strain MAFF 311018)).